Consider the following 264-residue polypeptide: 3-methyl-2-oxobutanoate hydroxymethyltransferase (264 aa).

Mg(2+) is bound by residues aspartate 45 and aspartate 84. 3-methyl-2-oxobutanoate is bound by residues aspartate 45–serine 46, aspartate 84, and lysine 113. Glutamate 115 is a Mg(2+) binding site. Glutamate 182 serves as the catalytic Proton acceptor.

It belongs to the PanB family. As to quaternary structure, homodecamer; pentamer of dimers. Mg(2+) serves as cofactor.

It is found in the cytoplasm. The catalysed reaction is 3-methyl-2-oxobutanoate + (6R)-5,10-methylene-5,6,7,8-tetrahydrofolate + H2O = 2-dehydropantoate + (6S)-5,6,7,8-tetrahydrofolate. Its pathway is cofactor biosynthesis; (R)-pantothenate biosynthesis; (R)-pantoate from 3-methyl-2-oxobutanoate: step 1/2. In terms of biological role, catalyzes the reversible reaction in which hydroxymethyl group from 5,10-methylenetetrahydrofolate is transferred onto alpha-ketoisovalerate to form ketopantoate. The protein is 3-methyl-2-oxobutanoate hydroxymethyltransferase of Nitrosococcus oceani (strain ATCC 19707 / BCRC 17464 / JCM 30415 / NCIMB 11848 / C-107).